A 277-amino-acid polypeptide reads, in one-letter code: Cell death abnormality protein 2 (277 aa).

Residues 14–112 (FYFPGMSRED…EASLLSAYKK (99 aa)) form the SH2 domain. The SH3 1 domain maps to 113–173 (PIIEVVVGTF…PANYVQVQSG (61 aa)). A disordered region spans residues 179-217 (RISKGTSQSSIGSSGNGAERFSSTSTSSENAEAHPTLPT). Over residues 182-206 (KGTSQSSIGSSGNGAERFSSTSTSS) the composition is skewed to low complexity. Positions 214 to 275 (TLPTTAKVTF…PFTYIRFNTA (62 aa)) constitute an SH3 2 domain.

This sequence belongs to the CRK family. Interacts with ced-5 (via C-terminus which contains a candidate SH3-binding, proline-rich region). Forms a ternary complex with ced-5 and ced-12. Interacts (via SH-2 domain) with src-1 (when activated and phosphorylated at 'Tyr-416').

In terms of biological role, required for cell migration and engulfment of cell corpses but not for programmed cell death/apoptosis. Also has a role in the migration of the 2 gonadal distal tip cells (DTCs). This Caenorhabditis briggsae protein is Cell death abnormality protein 2.